The primary structure comprises 91 residues: Large ribosomal subunit protein eL34 (91 aa).

The tract at residues 48-71 (RGRPVEMRKLPKTKKRPERPYPHL) is disordered.

Belongs to the eukaryotic ribosomal protein eL34 family.

The polypeptide is Large ribosomal subunit protein eL34 (rpl34e) (Pyrococcus abyssi (strain GE5 / Orsay)).